Here is a 1598-residue protein sequence, read N- to C-terminus: Transposon Ty2-LR2 Gag-Pol polyprotein (1598 aa).

Composition is skewed to polar residues over residues 1–11 (MESQQLHQNPH), 19–39 (ASVT…SASN), and 49–60 (KVNSQEETTPGT). Disordered stretches follow at residues 1–88 (MESQ…YQQH) and 359–449 (QHSE…SNDE). The segment at 295-397 (ENNINVSDRL…SSKPRAAKAH (103 aa)) is RNA-binding. Residues 369-381 (TSPNTTNTKVTTR) are compositionally biased toward low complexity. 2 stretches are compositionally biased toward polar residues: residues 399 to 408 (IATSSKFSRV) and 415 to 435 (ESTV…GQQQ). D457 acts as the For protease activity; shared with dimeric partner in catalysis. The interval 579–636 (NVNKSKSVNKYPYPLIHRMLGHANFRSIQKSLKKNAVTYLKESDIEWSNASTYQCPDC) is integrase-type zinc finger-like. Residues 656 to 831 (ESYEPFQYLH…AGLDITTILP (176 aa)) enclose the Integrase catalytic domain. Residues D667 and D732 each contribute to the Mg(2+) site. Polar residues-rich tracts occupy residues 915–927 (SFIE…QSYD), 1009–1034 (ESDT…STNE), and 1065–1082 (QRNS…STPS). 5 disordered regions span residues 915–934 (SFIE…ESDH), 1004–1034 (MGGT…STNE), 1059–1135 (TEEP…KSSK), 1146–1165 (LPLP…VSKD), and 1170–1205 (HSRQ…TEIE). Residues 1151–1165 (LTHKSPTDTSDVSKD) are compositionally biased toward basic and acidic residues. The short motif at 1193 to 1227 (KKRSLEDNETEIEVSRDTWNNKNMRSLEPPRSKKR) is the Bipartite nuclear localization signal element. The region spanning 1353–1491 (NDYYITQLDI…DILGLEIKYQ (139 aa)) is the Reverse transcriptase Ty1/copia-type domain. Mg(2+)-binding residues include D1361, D1442, and D1443.

The capsid protein forms a homotrimer, from which the VLPs are assembled. The protease is a homodimer, whose active site consists of two apposed aspartic acid residues. In terms of processing, initially, virus-like particles (VLPs) are composed of the structural unprocessed proteins Gag and Gag-Pol, and also contain the host initiator methionine tRNA (tRNA(i)-Met) which serves as a primer for minus-strand DNA synthesis, and a dimer of genomic Ty RNA. Processing of the polyproteins occurs within the particle and proceeds by an ordered pathway, called maturation. First, the protease (PR) is released by autocatalytic cleavage of the Gag-Pol polyprotein, and this cleavage is a prerequisite for subsequent processing at the remaining sites to release the mature structural and catalytic proteins. Maturation takes place prior to the RT reaction and is required to produce transposition-competent VLPs.

Its subcellular location is the cytoplasm. The protein localises to the nucleus. The enzyme catalyses DNA(n) + a 2'-deoxyribonucleoside 5'-triphosphate = DNA(n+1) + diphosphate. The catalysed reaction is Endonucleolytic cleavage to 5'-phosphomonoester.. Its function is as follows. Capsid protein (CA) is the structural component of the virus-like particle (VLP), forming the shell that encapsulates the retrotransposons dimeric RNA genome. The particles are assembled from trimer-clustered units and there are holes in the capsid shells that allow for the diffusion of macromolecules. CA also has nucleocapsid-like chaperone activity, promoting primer tRNA(i)-Met annealing to the multipartite primer-binding site (PBS), dimerization of Ty2 RNA and initiation of reverse transcription. The aspartyl protease (PR) mediates the proteolytic cleavages of the Gag and Gag-Pol polyproteins after assembly of the VLP. In terms of biological role, reverse transcriptase/ribonuclease H (RT) is a multifunctional enzyme that catalyzes the conversion of the retro-elements RNA genome into dsDNA within the VLP. The enzyme displays a DNA polymerase activity that can copy either DNA or RNA templates, and a ribonuclease H (RNase H) activity that cleaves the RNA strand of RNA-DNA heteroduplexes during plus-strand synthesis and hydrolyzes RNA primers. The conversion leads to a linear dsDNA copy of the retrotransposon that includes long terminal repeats (LTRs) at both ends. Functionally, integrase (IN) targets the VLP to the nucleus, where a subparticle preintegration complex (PIC) containing at least integrase and the newly synthesized dsDNA copy of the retrotransposon must transit the nuclear membrane. Once in the nucleus, integrase performs the integration of the dsDNA into the host genome. The polypeptide is Transposon Ty2-LR2 Gag-Pol polyprotein (TY2B-LR2) (Saccharomyces cerevisiae (strain ATCC 204508 / S288c) (Baker's yeast)).